The following is a 379-amino-acid chain: Beta sliding clamp (379 aa).

The protein belongs to the beta sliding clamp family. In terms of assembly, forms a ring-shaped head-to-tail homodimer around DNA which binds and tethers DNA polymerases and other proteins to the DNA. The DNA replisome complex has a single clamp-loading complex (3 tau and 1 each of delta, delta', psi and chi subunits) which binds 3 Pol III cores (1 core on the leading strand and 2 on the lagging strand) each with a beta sliding clamp dimer. Additional proteins in the replisome are other copies of gamma, psi and chi, Ssb, DNA helicase and RNA primase.

The protein resides in the cytoplasm. Functionally, confers DNA tethering and processivity to DNA polymerases and other proteins. Acts as a clamp, forming a ring around DNA (a reaction catalyzed by the clamp-loading complex) which diffuses in an ATP-independent manner freely and bidirectionally along dsDNA. Initially characterized for its ability to contact the catalytic subunit of DNA polymerase III (Pol III), a complex, multichain enzyme responsible for most of the replicative synthesis in bacteria; Pol III exhibits 3'-5' exonuclease proofreading activity. The beta chain is required for initiation of replication as well as for processivity of DNA replication. The chain is Beta sliding clamp (dnaN) from Rickettsia felis (strain ATCC VR-1525 / URRWXCal2) (Rickettsia azadi).